A 494-amino-acid polypeptide reads, in one-letter code: WD repeat-containing protein 37 (494 aa).

The tract at residues 1–38 (MPTESGSWAAARQTKQKRKSHSLSIKRTNSSEQDRPGL) is disordered. Polar residues predominate over residues 22–31 (SLSIKRTNSS). WD repeat units lie at residues 154–194 (GHRD…CLIK) and 197–236 (GHAG…PTPQ). A disordered region spans residues 236-266 (QPTADTSISGEEEVDFSDKDENDGDGDASSD). A compositionally biased stretch (acidic residues) spans 245–263 (GEEEVDFSDKDENDGDGDA). 5 WD repeats span residues 279–318 (SHQG…LVHS), 321–360 (GHDQ…IHSV), 365–403 (GHTD…SPIA), 406–445 (RTDS…LARL), and 452–493 (GHRR…LLQE).

It is found in the cytoplasm. It localises to the nucleus. The polypeptide is WD repeat-containing protein 37 (wdr37) (Xenopus tropicalis (Western clawed frog)).